The following is a 161-amino-acid chain: Anthrone oxygenase tpcL (161 aa).

An N-linked (GlcNAc...) asparagine glycan is attached at asparagine 4. A run of 4 helical transmembrane segments spans residues 15–35 (VITGSFLSGLMMGLSVVDIPV), 56–74 (IGHKMMPSLAVTTCLLYGY), 87–107 (LPHIIAAVTTISMVPFTWLVM), and 136–155 (WAQLHAVRSLFPLMGSVLGL).

It belongs to the anthrone oxygenase family. Specifically expressed in conidia.

The protein localises to the membrane. The catalysed reaction is emodin anthrone + O2 = emodin + H2O + H(+). Its pathway is secondary metabolite biosynthesis. In terms of biological role, anthrone oxygenase; part of the gene cluster that mediates the biosynthesis of trypacidin, a mycotoxin with antiprotozoal activity and that plays a role in the infection process. The pathway begins with the synthesis of atrochrysone thioester by the polyketide synthase (PKS) tpcC. The atrochrysone carboxyl ACP thioesterase tpcB then breaks the thioester bond and releases the atrochrysone carboxylic acid from tpcC. The decarboxylase tpcK converts atrochrysone carboxylic acid to atrochrysone which is further reduced into emodin anthrone. The next step is performed by the emodin anthrone oxygenase tpcL that catalyzes the oxidation of emodinanthrone to emodin. Emodin O-methyltransferase encoded by tpcA catalyzes methylation of the 8-hydroxy group of emodin to form questin. Ring cleavage of questin by questin oxidase tpcI leads to desmethylsulochrin via several intermediates including questin epoxide. Another methylation step catalyzed by tpcM leads to the formation of sulochrin which is further converted to monomethylsulfochrin by tpcH. Finally, the tpcJ catalyzes the conversion of monomethylsulfochrin to trypacidin. Trypacidin is toxic for human pulmonary and bronchial epithelial cells by initiating the intracellular formation of nitric oxide (NO) and hydrogen peroxide (H(2)O(2)), thus triggering host necrotic cell death. The trypacidin pathway is also able to produce endocrocin via a distinct route from the endocrocin Enc pathway. This Aspergillus fumigatus (strain ATCC MYA-4609 / CBS 101355 / FGSC A1100 / Af293) (Neosartorya fumigata) protein is Anthrone oxygenase tpcL.